Reading from the N-terminus, the 800-residue chain is Phenylalanine--tRNA ligase beta subunit (800 aa).

Residues 39–154 (TKEIKNLVVG…TEVKPGTDAL (116 aa)) form the tRNA-binding domain. Positions 408-483 (CFVTPIDISV…RIYGYDKIPS (76 aa)) constitute a B5 domain. The Mg(2+) site is built by D461, D467, E470, and E471. Positions 708–800 (PRFPGVSRDI…ALKSEGATIR (93 aa)) constitute an FDX-ACB domain.

Belongs to the phenylalanyl-tRNA synthetase beta subunit family. Type 1 subfamily. Tetramer of two alpha and two beta subunits. Requires Mg(2+) as cofactor.

The protein localises to the cytoplasm. The catalysed reaction is tRNA(Phe) + L-phenylalanine + ATP = L-phenylalanyl-tRNA(Phe) + AMP + diphosphate + H(+). The chain is Phenylalanine--tRNA ligase beta subunit from Staphylococcus saprophyticus subsp. saprophyticus (strain ATCC 15305 / DSM 20229 / NCIMB 8711 / NCTC 7292 / S-41).